Here is a 212-residue protein sequence, read N- to C-terminus: Imidazole glycerol phosphate synthase subunit HisH (212 aa).

In terms of domain architecture, Glutamine amidotransferase type-1 spans 3–212 (TVAVIDYGMG…QNFAAWDGRW (210 aa)). Residue Cys81 is the Nucleophile of the active site. Active-site residues include His190 and Glu192.

As to quaternary structure, heterodimer of HisH and HisF.

It localises to the cytoplasm. It carries out the reaction 5-[(5-phospho-1-deoxy-D-ribulos-1-ylimino)methylamino]-1-(5-phospho-beta-D-ribosyl)imidazole-4-carboxamide + L-glutamine = D-erythro-1-(imidazol-4-yl)glycerol 3-phosphate + 5-amino-1-(5-phospho-beta-D-ribosyl)imidazole-4-carboxamide + L-glutamate + H(+). The enzyme catalyses L-glutamine + H2O = L-glutamate + NH4(+). It functions in the pathway amino-acid biosynthesis; L-histidine biosynthesis; L-histidine from 5-phospho-alpha-D-ribose 1-diphosphate: step 5/9. IGPS catalyzes the conversion of PRFAR and glutamine to IGP, AICAR and glutamate. The HisH subunit catalyzes the hydrolysis of glutamine to glutamate and ammonia as part of the synthesis of IGP and AICAR. The resulting ammonia molecule is channeled to the active site of HisF. The protein is Imidazole glycerol phosphate synthase subunit HisH of Pseudomonas syringae pv. syringae (strain B728a).